A 396-amino-acid polypeptide reads, in one-letter code: Cell division protein FtsZ 1 (396 aa).

The tract at residues 1 to 38 (MDSIVQDAIDEAEESEDSASEPADVAGGGGDTVPTGTM) is disordered. Acidic residues predominate over residues 8–19 (AIDEAEESEDSA). Residues 61 to 65 (GAGSN), 148 to 150 (GTG), glutamate 179, arginine 183, and aspartate 226 each bind GTP. Positions 358–396 (QIYGRNEAAEGDGPAQESTPEPEPEPQAGSEIEDIDYVE) are disordered.

Belongs to the FtsZ family. As to quaternary structure, homodimer. Polymerizes to form a dynamic ring structure in a strictly GTP-dependent manner. Interacts directly with several other division proteins.

It is found in the cytoplasm. Its function is as follows. Essential cell division protein that forms a contractile ring structure (Z ring) at the future cell division site. The regulation of the ring assembly controls the timing and the location of cell division. One of the functions of the FtsZ ring is to recruit other cell division proteins to the septum to produce a new cell wall between the dividing cells. Binds GTP and shows GTPase activity. The chain is Cell division protein FtsZ 1 from Halobacterium salinarum (strain ATCC 29341 / DSM 671 / R1).